The chain runs to 545 residues: Glucose-6-phosphate isomerase (545 aa).

The Proton donor role is filled by Glu343. Active-site residues include His374 and Lys513.

This sequence belongs to the GPI family.

The protein localises to the cytoplasm. The enzyme catalyses alpha-D-glucose 6-phosphate = beta-D-fructose 6-phosphate. Its pathway is carbohydrate biosynthesis; gluconeogenesis. It functions in the pathway carbohydrate degradation; glycolysis; D-glyceraldehyde 3-phosphate and glycerone phosphate from D-glucose: step 2/4. Functionally, catalyzes the reversible isomerization of glucose-6-phosphate to fructose-6-phosphate. The polypeptide is Glucose-6-phosphate isomerase (Methylibium petroleiphilum (strain ATCC BAA-1232 / LMG 22953 / PM1)).